Consider the following 397-residue polypeptide: Odorant receptor 85a (397 aa).

The Cytoplasmic segment spans residues 1-46 (MIFKYIQEPVLGSLFRSRDSLIYLNRSIDQMGWRLPPRTKPYWWLY). Residues 47–67 (YIWTLVVIVLVFIFIPYGLIM) traverse the membrane as a helical segment. At 68–83 (TGIKEFKNFTTTDLFT) the chain is on the extracellular side. An N-linked (GlcNAc...) asparagine glycan is attached at Asn75. Residues 84–104 (YVQVPVNTNASIMKGIIVLFM) traverse the membrane as a helical segment. Residues 105–142 (RRRFSRAQKMMDAMDIRCTKMEEKVQVHRAAALCNRVV) are Cytoplasmic-facing. A helical transmembrane segment spans residues 143 to 163 (VIYHCIYFGYLSMALTGALVI). Residues 164-192 (GKTPFCLYNPLVNPDDHFYLATAIESVTM) lie on the Extracellular side of the membrane. Residues 193–213 (AGIILANLILDVYPIIYVVVL) form a helical membrane-spanning segment. Over 214–262 (RIHMELLSERIKTLRTDVEKGDDQHYAELVECVKDHKLIVEYGNTLRPM) the chain is Cytoplasmic. Residues 263-283 (ISATMFIQLLSVGLLLGLAAV) traverse the membrane as a helical segment. At 284 to 294 (SMQFYNTVMER) the chain is on the extracellular side. The chain crosses the membrane as a helical span at residues 295 to 315 (VVSGVYTIAILSQTFPFCYVC). The Cytoplasmic segment spans residues 316 to 347 (EQLSSDCESLTNTLFHSKWIGAERRYRTTMLY). Residues 348–368 (FIHNVQQSILFTAGGIFPICL) traverse the membrane as a helical segment. At 369 to 397 (NTNIKMAKFAFSVVTIVNEMDLAEKLRRE) the chain is on the extracellular side.

It belongs to the insect chemoreceptor superfamily. Heteromeric odorant receptor channel (TC 1.A.69) family. Or2a subfamily. As to quaternary structure, interacts with Orco. Complexes exist early in the endomembrane system in olfactory sensory neurons (OSNs), coupling these complexes to the conserved ciliary trafficking pathway. As to expression, expressed in olfactory sensory neurons in the antenna.

Its subcellular location is the cell membrane. Functionally, odorant receptor which mediates acceptance or avoidance behavior, depending on its substrates. The odorant receptor repertoire encodes a large collection of odor stimuli that vary widely in identity, intensity, and duration. May form a complex with Orco to form odorant-sensing units, providing sensitive and prolonged odorant signaling and calcium permeability. The sequence is that of Odorant receptor 85a (Or85a) from Drosophila melanogaster (Fruit fly).